Here is a 265-residue protein sequence, read N- to C-terminus: 5'-nucleotidase SurE (265 aa).

A divalent metal cation contacts are provided by aspartate 8, aspartate 9, serine 39, and asparagine 96.

It belongs to the SurE nucleotidase family. The cofactor is a divalent metal cation.

Its subcellular location is the cytoplasm. It catalyses the reaction a ribonucleoside 5'-phosphate + H2O = a ribonucleoside + phosphate. Nucleotidase that shows phosphatase activity on nucleoside 5'-monophosphates. This chain is 5'-nucleotidase SurE, found in Dehalococcoides mccartyi (strain CBDB1).